A 520-amino-acid chain; its full sequence is GMP synthase [glutamine-hydrolyzing] (520 aa).

The Glutamine amidotransferase type-1 domain maps to 12–205 (KIIVLDYGSQ…AVNICGARGD (194 aa)). The active-site Nucleophile is the Cys89. Residues His179 and Glu181 contribute to the active site. Positions 206–395 (WSMDNFIDME…LGMPDEVVWR (190 aa)) constitute a GMPS ATP-PPase domain. 233–239 (SGGVDSS) provides a ligand contact to ATP.

As to quaternary structure, homodimer.

The catalysed reaction is XMP + L-glutamine + ATP + H2O = GMP + L-glutamate + AMP + diphosphate + 2 H(+). It participates in purine metabolism; GMP biosynthesis; GMP from XMP (L-Gln route): step 1/1. Catalyzes the synthesis of GMP from XMP. This Streptococcus agalactiae serotype III (strain NEM316) protein is GMP synthase [glutamine-hydrolyzing].